Consider the following 180-residue polypeptide: Large ribosomal subunit protein uL5 (180 aa).

The protein belongs to the universal ribosomal protein uL5 family. As to quaternary structure, part of the 50S ribosomal subunit; part of the 5S rRNA/L5/L18/L25 subcomplex. Contacts the 5S rRNA and the P site tRNA. Forms a bridge to the 30S subunit in the 70S ribosome.

Its function is as follows. This is one of the proteins that bind and probably mediate the attachment of the 5S RNA into the large ribosomal subunit, where it forms part of the central protuberance. In the 70S ribosome it contacts protein S13 of the 30S subunit (bridge B1b), connecting the 2 subunits; this bridge is implicated in subunit movement. Contacts the P site tRNA; the 5S rRNA and some of its associated proteins might help stabilize positioning of ribosome-bound tRNAs. The polypeptide is Large ribosomal subunit protein uL5 (Streptococcus sanguinis (strain SK36)).